A 937-amino-acid chain; its full sequence is CAP-Gly domain-containing linker protein 1 homolog (937 aa).

A CAP-Gly domain is found at 39–81 (GPIHGKDGMFCGIELLEPNGKHDGTFQGVSYFIATPYHGIFAP). Disordered regions lie at residues 90–131 (EELP…VMST) and 264–548 (LPND…SRLQ). The span at 268–281 (LNANFSNKNSTTTF) shows a compositional bias: polar residues. Residues 285 to 295 (ETPKVEIRENG) are compositionally biased toward basic and acidic residues. A compositionally biased stretch (polar residues) spans 296–309 (NLDNSIETPPQQSP). 4 stretches are compositionally biased toward basic and acidic residues: residues 317-353 (HESDSSSKKDDTKSDKSPTKKSQKMEEKPVVKKKEEP), 383-396 (IEAEKTKPKKEIKS), 409-424 (PQKENKEGGEMTETPR), and 463-473 (AKERVEKEKKI). Positions 492–501 (SSIPSTSSAS) are enriched in low complexity. 2 coiled-coil regions span residues 566-740 (EDNE…VDEI) and 773-800 (QQIEDLRRKQIHDEEEKEAMKRSFDLMQ). Disordered stretches follow at residues 819–866 (MESR…DSMN) and 916–937 (PTIKSESSRIGNTSDSGIGLVM). Residues 832–844 (RSRSSASGSRPIS) are compositionally biased toward low complexity. Over residues 845–858 (MATSNGGDQRLSTS) the composition is skewed to polar residues.

The polypeptide is CAP-Gly domain-containing linker protein 1 homolog (Caenorhabditis elegans).